The primary structure comprises 215 residues: Small ribosomal subunit protein eS1 (215 aa).

The protein belongs to the eukaryotic ribosomal protein eS1 family.

The polypeptide is Small ribosomal subunit protein eS1 (Thermoplasma volcanium (strain ATCC 51530 / DSM 4299 / JCM 9571 / NBRC 15438 / GSS1)).